We begin with the raw amino-acid sequence, 484 residues long: tRNA sulfurtransferase (484 aa).

A THUMP domain is found at glutamate 63 to arginine 167. ATP contacts are provided by residues leucine 185–isoleucine 186, lysine 267, glycine 289, and glutamine 298. Cysteine 346 and cysteine 458 are oxidised to a cystine. In terms of domain architecture, Rhodanese spans isoleucine 406–proline 484. Cysteine 458 (cysteine persulfide intermediate) is an active-site residue.

The protein belongs to the ThiI family.

It localises to the cytoplasm. The enzyme catalyses [ThiI sulfur-carrier protein]-S-sulfanyl-L-cysteine + a uridine in tRNA + 2 reduced [2Fe-2S]-[ferredoxin] + ATP + H(+) = [ThiI sulfur-carrier protein]-L-cysteine + a 4-thiouridine in tRNA + 2 oxidized [2Fe-2S]-[ferredoxin] + AMP + diphosphate. It catalyses the reaction [ThiS sulfur-carrier protein]-C-terminal Gly-Gly-AMP + S-sulfanyl-L-cysteinyl-[cysteine desulfurase] + AH2 = [ThiS sulfur-carrier protein]-C-terminal-Gly-aminoethanethioate + L-cysteinyl-[cysteine desulfurase] + A + AMP + 2 H(+). It functions in the pathway cofactor biosynthesis; thiamine diphosphate biosynthesis. Its function is as follows. Catalyzes the ATP-dependent transfer of a sulfur to tRNA to produce 4-thiouridine in position 8 of tRNAs, which functions as a near-UV photosensor. Also catalyzes the transfer of sulfur to the sulfur carrier protein ThiS, forming ThiS-thiocarboxylate. This is a step in the synthesis of thiazole, in the thiamine biosynthesis pathway. The sulfur is donated as persulfide by IscS. This is tRNA sulfurtransferase from Shewanella pealeana (strain ATCC 700345 / ANG-SQ1).